The chain runs to 559 residues: MVLAAVLSMLRYVGGSDDRDFVDRLHSYFTCNLLIGLAVLVSFKQFGGKPVECLVPDIFSSSWEQYAENYCWASDTYYVPTNEPVAGLQSDEKRQRKISYYQWVPFFLLLEAACFRLPSLLWKYLAGHSGIKINEIVKLSSDPNNIKPDIKRANIKSLTVHLQGALRFHRRLQKKQIRPHRFLWLFNLPYSAFFVTAMYLCTKFFYLANVCLQLMFMNRFLETDKYKWYGMGALVDLLNGTTWEQSGMFPRVSLCDFDVRVMGNMQEHTIQCVLVINIFNEKIFILLWFWYLALLVFTFGSFFYWLLVSLWRHLNVRFIIRHLEMSDIAFDSSEDGAQEKVNRFISNYLKSDGVFVIRMMTLQSGVIFGTDLVQELWRNFHGSEPQLKRSNSAPKIEEREQWWPAYPSLVNPINPWRYRDENQANALRWRRALGANVDNSIATQDLMEKLLPQNAHMRPSDDELLNRQPIAVQASYIDDESDGKLKNEEKQNQQNATQPPYCYTNQNPTPYQNQNQIQNQNQYSNYYRTPSLSRGTDSRPVSTATDTDQTKKQSMSTFK.

A run of 4 helical transmembrane segments spans residues tyrosine 28–glycine 48, glutamine 102–tryptophan 122, phenylalanine 182–threonine 202, and isoleucine 283–phenylalanine 303. Disordered stretches follow at residues glutamate 488 to glutamine 514 and tyrosine 527 to lysine 559. Positions tyrosine 503–glutamine 514 are enriched in low complexity. The segment covering arginine 528–lysine 559 has biased composition (polar residues).

It belongs to the pannexin family.

The protein resides in the cell membrane. It is found in the cell junction. It localises to the gap junction. In terms of biological role, structural component of the gap junctions. The polypeptide is Innexin-10 (inx-10) (Caenorhabditis elegans).